The chain runs to 345 residues: Ketol-acid reductoisomerase (NADP(+)) (345 aa).

The KARI N-terminal Rossmann domain maps to 2-182 (AKVYHDSSAD…GTTRAGVLET (181 aa)). NADP(+) is bound by residues 25–28 (YGSQ), Arg48, Ser51, Ser53, and 83–86 (DTEQ). His108 is a catalytic residue. Gly134 is a binding site for NADP(+). One can recognise a KARI C-terminal knotted domain in the interval 183–328 (TFKEETETDL…AQLRDMMTFL (146 aa)). Residues Asp191, Glu195, Glu227, and Glu231 each contribute to the Mg(2+) site. Residue Ser252 participates in substrate binding.

This sequence belongs to the ketol-acid reductoisomerase family. Mg(2+) is required as a cofactor.

The enzyme catalyses (2R)-2,3-dihydroxy-3-methylbutanoate + NADP(+) = (2S)-2-acetolactate + NADPH + H(+). The catalysed reaction is (2R,3R)-2,3-dihydroxy-3-methylpentanoate + NADP(+) = (S)-2-ethyl-2-hydroxy-3-oxobutanoate + NADPH + H(+). Its pathway is amino-acid biosynthesis; L-isoleucine biosynthesis; L-isoleucine from 2-oxobutanoate: step 2/4. It functions in the pathway amino-acid biosynthesis; L-valine biosynthesis; L-valine from pyruvate: step 2/4. Its function is as follows. Involved in the biosynthesis of branched-chain amino acids (BCAA). Catalyzes an alkyl-migration followed by a ketol-acid reduction of (S)-2-acetolactate (S2AL) to yield (R)-2,3-dihydroxy-isovalerate. In the isomerase reaction, S2AL is rearranged via a Mg-dependent methyl migration to produce 3-hydroxy-3-methyl-2-ketobutyrate (HMKB). In the reductase reaction, this 2-ketoacid undergoes a metal-dependent reduction by NADPH to yield (R)-2,3-dihydroxy-isovalerate. The protein is Ketol-acid reductoisomerase (NADP(+)) of Koribacter versatilis (strain Ellin345).